Reading from the N-terminus, the 819-residue chain is Leucine--tRNA ligase (819 aa).

Residues 40–51 (PYPSGAGLHVGH) carry the 'HIGH' region motif. The 'KMSKS' region signature appears at 600–604 (KMSKS). Lysine 603 serves as a coordination point for ATP.

It belongs to the class-I aminoacyl-tRNA synthetase family.

It is found in the cytoplasm. It carries out the reaction tRNA(Leu) + L-leucine + ATP = L-leucyl-tRNA(Leu) + AMP + diphosphate. The polypeptide is Leucine--tRNA ligase (Chlamydia trachomatis serovar L2 (strain ATCC VR-902B / DSM 19102 / 434/Bu)).